Reading from the N-terminus, the 607-residue chain is Thymidine kinase (607 aa).

2 disordered regions span residues 1-160 (MAGF…ADST) and 180-215 (DDKSDCESEDESNFRRPSSHSALKQKNGGKGKPSGL). Residues 17–32 (KCQEDESPENERHENF) are compositionally biased toward basic and acidic residues. Polar residues-rich tracts occupy residues 88–106 (AAVTSNTGNSPGSRHTSCP), 148–160 (RKTSCTEGGADST), and 194–203 (RRPSSHSALK). Position 291-298 (291-298 (GAPGVGKT)) interacts with ATP. Residue E317 is the Proton acceptor of the active site. Residue Q355 coordinates substrate. Residue R445 coordinates ATP. R451 is a binding site for substrate.

It belongs to the herpesviridae thymidine kinase family. As to quaternary structure, homodimer.

The protein localises to the virion tegument. It localises to the host nucleus. The catalysed reaction is thymidine + ATP = dTMP + ADP + H(+). In terms of biological role, catalyzes the transfer of the gamma-phospho group of ATP to thymidine to generate dTMP in the salvage pathway of pyrimidine synthesis. The dTMP serves as a substrate for DNA polymerase during viral DNA replication. Allows the virus to be reactivated and to grow in non-proliferative cells lacking a high concentration of phosphorylated nucleic acid precursors. The sequence is that of Thymidine kinase from Homo sapiens (Human).